A 184-amino-acid polypeptide reads, in one-letter code: Large ribosomal subunit protein uL6 (184 aa).

Belongs to the universal ribosomal protein uL6 family. In terms of assembly, part of the 50S ribosomal subunit.

This protein binds to the 23S rRNA, and is important in its secondary structure. It is located near the subunit interface in the base of the L7/L12 stalk, and near the tRNA binding site of the peptidyltransferase center. The chain is Large ribosomal subunit protein uL6 from Thermomicrobium roseum (strain ATCC 27502 / DSM 5159 / P-2).